A 381-amino-acid polypeptide reads, in one-letter code: Heterogeneous nuclear rnp K-like protein 2 (381 aa).

The tract at residues 1–34 is disordered; sequence MSQFFEAATPVAIPTNNTNGGSSDAGSAATGGAP. Residues 15–33 are compositionally biased toward low complexity; it reads TNNTNGGSSDAGSAATGGA. KH domains are found at residues 43–107, 156–221, and 258–326; these read TINH…IGDI, IGYV…LIEI, and NTRI…ESML. Residues 357-381 form a disordered region; it reads RSDSASFLEEKEEPQKNHDNKEEQS. Phosphoserine is present on residues serine 358, serine 360, and serine 362. Over residues 369–381 the composition is skewed to basic and acidic residues; the sequence is EPQKNHDNKEEQS.

Belongs to the HEK2 family. As to quaternary structure, binds RNA. Phosphorylated by the plasma membrane-Anchored casein kinase YCK1. Phosphorylation at its C-terminus reduces its RNA-binding capacity.

The protein localises to the cytoplasm. It localises to the P-body. It is found in the nucleus. Its subcellular location is the chromosome. The protein resides in the telomere. RNA-binding protein involved in the correct localization of transcripts in the cell. RNA localization is a widespread mechanism for achieving localized protein synthesis. Required for the asymmetric localization to the daughter cell nucleus of the ASH1 transcript, coding for a specific repressor of transcription. Overexpression inhibits translation of the ASH1 transcript. Involved in the stability of transcripts, like the MTL1 mRNA. Involved in structural and functional organization of telomeric chromatin and regulates silencing at the HMR locus. This Saccharomyces cerevisiae (strain RM11-1a) (Baker's yeast) protein is Heterogeneous nuclear rnp K-like protein 2 (HEK2).